A 502-amino-acid chain; its full sequence is Vicilin Jug r 6.0101 (502 aa).

The signal sequence occupies residues 1–27 (MAFKPKIPIALLLLTSLLAICAGLALA). The segment covering 67–84 (ARERAERRRSEEGSSREE) has biased composition (basic and acidic residues). Positions 67–100 (ARERAERRRSEEGSSREEGYEEEELGGEREEENP) are disordered. A compositionally biased stretch (acidic residues) spans 85–100 (GYEEEELGGEREEENP). Cupin type-1 domains are found at residues 101-259 (YVFE…DQLE) and 302-475 (FNLF…REVE). A glycan (N-linked (GlcNAc...) asparagine) is linked at Asn-340. The segment at 374 to 401 (HLSSSGSRGQREGSGSSRRRSRSGPSYQ) is disordered. The segment covering 376 to 389 (SSSGSRGQREGSGS) has biased composition (low complexity).

It belongs to the 7S seed storage protein family. Homotrimer. Post-translationally, N-glycosylated; paucimannose-type structures containing xylose. Expressed in seed (at protein level).

Functionally, seed storage protein. In Juglans regia (English walnut), this protein is Vicilin Jug r 6.0101.